A 381-amino-acid polypeptide reads, in one-letter code: L-lactate dehydrogenase (381 aa).

Positions 1–380 (MIISASTDYR…SRDSLVRELG (380 aa)) constitute an FMN hydroxy acid dehydrogenase domain. A substrate-binding site is contributed by Tyr24. Residues Ser106 and Gln127 each contribute to the FMN site. Position 129 (Tyr129) interacts with substrate. Thr155 provides a ligand contact to FMN. A substrate-binding site is contributed by Arg164. Lys251 serves as a coordination point for FMN. Catalysis depends on His275, which acts as the Proton acceptor. Arg278 is a binding site for substrate. 306–330 (DSGIRSGLDVVRMIALGADTVLIGR) serves as a coordination point for FMN.

The protein belongs to the FMN-dependent alpha-hydroxy acid dehydrogenase family. As to quaternary structure, homotetramer. FMN is required as a cofactor.

Its subcellular location is the cell inner membrane. It catalyses the reaction (S)-lactate + A = pyruvate + AH2. Functionally, catalyzes the conversion of L-lactate to pyruvate. Is coupled to the respiratory chain. This is L-lactate dehydrogenase from Pseudomonas putida (strain W619).